A 187-amino-acid chain; its full sequence is uncharacterized protein (187 aa).

The Tyr recombinase domain maps to 53 to 187 (RKPHIYSPAD…CLQTSYVVPG (135 aa)). Active-site residues include R98 and K123.

The protein belongs to the 'phage' integrase family.

This is an uncharacterized protein from Sinorhizobium fredii (strain NBRC 101917 / NGR234).